Reading from the N-terminus, the 267-residue chain is Mediator of RNA polymerase II transcription subunit 18 (267 aa).

Belongs to the Mediator complex subunit 18 family. Component of the Mediator complex.

The protein localises to the nucleus. Component of the Mediator complex, a coactivator involved in the regulated transcription of nearly all RNA polymerase II-dependent genes. Mediator functions as a bridge to convey information from gene-specific regulatory proteins to the basal RNA polymerase II transcription machinery. Mediator is recruited to promoters by direct interactions with regulatory proteins and serves as a scaffold for the assembly of a functional preinitiation complex with RNA polymerase II and the general transcription factors. This chain is Mediator of RNA polymerase II transcription subunit 18 (SRB5), found in Coccidioides immitis (strain RS) (Valley fever fungus).